An 84-amino-acid chain; its full sequence is Esculentin-1B (84 aa).

Residues 1-22 (MFTLKKPLLLIVLLGMISLSLC) form the signal peptide. A propeptide spanning residues 23 to 38 (EQERNADEEEGSEIKR) is cleaved from the precursor. Residues Cys-78 and Cys-84 are joined by a disulfide bond.

Belongs to the frog skin active peptide (FSAP) family. Brevinin subfamily. In terms of tissue distribution, expressed by the skin glands.

Its subcellular location is the secreted. In terms of biological role, shows antibacterial activity against representative Gram-negative and Gram-positive bacterial species, and hemolytic activity. This Pelophylax lessonae (Pool frog) protein is Esculentin-1B.